Consider the following 1050-residue polypeptide: Probable beta-glucosidase E (1050 aa).

The interval 1-87 is disordered; the sequence is MPPPDSNPGS…RSSSTNGGHN (87 aa). Over 1 to 174 the chain is Cytoplasmic; that stretch reads MPPPDSNPGS…VKYARIWRRT (174 aa). A compositionally biased stretch (basic and acidic residues) spans 11–20; sequence FRDHLKHDNK. The segment covering 47–56 has biased composition (low complexity); that stretch reads SPRSASASSS. Over residues 78–87 the composition is skewed to polar residues; it reads RSSSTNGGHN. The helical; Signal-anchor for type II membrane protein transmembrane segment at 175-195 threads the bilayer; that stretch reads LVVVIVALALLVWGFLRFTAA. Over 196 to 1050 the chain is Extracellular; the sequence is QRQGPKVWPM…SRDLPLQAKY (855 aa). Residues N236, N244, N300, and N430 are each glycosylated (N-linked (GlcNAc...) asparagine). The active site involves D458. Residues N501, N540, N605, N884, N920, N929, and N993 are each glycosylated (N-linked (GlcNAc...) asparagine).

The protein belongs to the glycosyl hydrolase 3 family.

It is found in the cell membrane. It carries out the reaction Hydrolysis of terminal, non-reducing beta-D-glucosyl residues with release of beta-D-glucose.. It functions in the pathway glycan metabolism; cellulose degradation. Its function is as follows. Beta-glucosidases are one of a number of cellulolytic enzymes involved in the degradation of cellulosic biomass. Catalyzes the last step releasing glucose from the inhibitory cellobiose. This is Probable beta-glucosidase E (bglE) from Aspergillus clavatus (strain ATCC 1007 / CBS 513.65 / DSM 816 / NCTC 3887 / NRRL 1 / QM 1276 / 107).